The following is a 589-amino-acid chain: Proline--tRNA ligase (589 aa).

Belongs to the class-II aminoacyl-tRNA synthetase family. ProS type 1 subfamily. Homodimer.

Its subcellular location is the cytoplasm. It catalyses the reaction tRNA(Pro) + L-proline + ATP = L-prolyl-tRNA(Pro) + AMP + diphosphate. Its function is as follows. Catalyzes the attachment of proline to tRNA(Pro) in a two-step reaction: proline is first activated by ATP to form Pro-AMP and then transferred to the acceptor end of tRNA(Pro). As ProRS can inadvertently accommodate and process non-cognate amino acids such as alanine and cysteine, to avoid such errors it has two additional distinct editing activities against alanine. One activity is designated as 'pretransfer' editing and involves the tRNA(Pro)-independent hydrolysis of activated Ala-AMP. The other activity is designated 'posttransfer' editing and involves deacylation of mischarged Ala-tRNA(Pro). The misacylated Cys-tRNA(Pro) is not edited by ProRS. The chain is Proline--tRNA ligase from Corynebacterium aurimucosum (strain ATCC 700975 / DSM 44827 / CIP 107346 / CN-1) (Corynebacterium nigricans).